The chain runs to 625 residues: Alpha-1,3-galactosidase A (625 aa).

The N-terminal stretch at 1-32 is a signal peptide; that stretch reads MAHGCSGGAMSRFVFLGVALALLGGATSPAAA. 5 PbH1 repeats span residues 342 to 364, 460 to 482, 483 to 505, 516 to 537, and 573 to 611; these read KGKVSITRSLFDGPHDDPINIHG, TPSVVISGNVFRNVPTRGILVTT, RKPVLITGNRFDGMSMASIYVSA, VADLTIRGNSFTRPSGPVIFVE, and VGGFAFTGNTVRRLDGADHPPYTSPLFVFHGSSGIRIAR.

Belongs to the glycosyl hydrolase 110 family. A subfamily.

The enzyme catalyses Hydrolysis of terminal, non-reducing branched (1-&gt;3)-alpha-D-galactosidic residues, producing free D-galactose.. The catalysed reaction is Hydrolysis of terminal, non-reducing alpha-D-galactose residues in alpha-D-galactosides, including galactose oligosaccharides, galactomannans and galactolipids.. Functionally, alpha-galactosidase that specifically removes branched alpha-1,3-linked galactose residues present in blood group B antigens. Has no activity toward linear alpha-1,3-linked galactose residues. This Streptomyces avermitilis (strain ATCC 31267 / DSM 46492 / JCM 5070 / NBRC 14893 / NCIMB 12804 / NRRL 8165 / MA-4680) protein is Alpha-1,3-galactosidase A (glaA).